Consider the following 301-residue polypeptide: t-SNARE affecting a late Golgi compartment protein 2 (301 aa).

Topologically, residues 1–279 are cytoplasmic; sequence MAYRDRTGLY…SHQKNTGRLR (279 aa). A coiled-coil region spans residues 92–120; the sequence is SDKTEQENEIQRLTIQITQDFQRCQKLLQ. The t-SNARE coiled-coil homology domain maps to 206–268; that stretch reads DEQAIRHERA…KSAEKELIKA (63 aa). Residues 280–300 form a helical; Anchor for type IV membrane protein membrane-spanning segment; it reads FICFLILLIVALIVILAIKLL. Position 301 (Arg301) is a topological domain, vesicular.

Belongs to the syntaxin family.

The protein resides in the golgi apparatus. Its subcellular location is the trans-Golgi network membrane. It is found in the endosome membrane. Functionally, t-SNARE that functions in transport from the endosome to the late Golgi and on the endocytic pathway. The protein is t-SNARE affecting a late Golgi compartment protein 2 (tlg2) of Schizosaccharomyces pombe (strain 972 / ATCC 24843) (Fission yeast).